A 169-amino-acid chain; its full sequence is uncharacterized protein (169 aa).

A helical transmembrane segment spans residues 10 to 30; sequence YFVTILIIIIIILIVLLIVFL. Residues 98 to 123 form a disordered region; the sequence is QSKPINKNNQQTKNTPTPLDDRPDLS. Residues 100 to 115 are compositionally biased toward low complexity; that stretch reads KPINKNNQQTKNTPTP.

The protein resides in the membrane. This is an uncharacterized protein from Acanthamoeba polyphaga (Amoeba).